The chain runs to 473 residues: Photosystem II CP43 reaction center protein (473 aa).

The propeptide occupies 1–14; the sequence is MKNLYSLRRFYHVE. Thr-15 is subject to N-acetylthreonine. Position 15 is a phosphothreonine (Thr-15). A run of 5 helical transmembrane segments spans residues 69 to 93, 134 to 155, 178 to 200, 255 to 275, and 291 to 312; these read LFEV…PHLA, LVGP…KDKN, KAMY…RIIS, KPWA…LSYS, and WFNT…ASQS. Glu-367 serves as a coordination point for [CaMn4O5] cluster. A helical membrane pass occupies residues 447–471; that stretch reads RARAAAAGFEKGIDRDNEPVLSMRP.

It belongs to the PsbB/PsbC family. PsbC subfamily. As to quaternary structure, PSII is composed of 1 copy each of membrane proteins PsbA, PsbB, PsbC, PsbD, PsbE, PsbF, PsbH, PsbI, PsbJ, PsbK, PsbL, PsbM, PsbT, PsbX, PsbY, PsbZ, Psb30/Ycf12, at least 3 peripheral proteins of the oxygen-evolving complex and a large number of cofactors. It forms dimeric complexes. Binds multiple chlorophylls and provides some of the ligands for the Ca-4Mn-5O cluster of the oxygen-evolving complex. It may also provide a ligand for a Cl- that is required for oxygen evolution. PSII binds additional chlorophylls, carotenoids and specific lipids. is required as a cofactor.

The protein resides in the plastid. It is found in the chloroplast thylakoid membrane. In terms of biological role, one of the components of the core complex of photosystem II (PSII). It binds chlorophyll and helps catalyze the primary light-induced photochemical processes of PSII. PSII is a light-driven water:plastoquinone oxidoreductase, using light energy to abstract electrons from H(2)O, generating O(2) and a proton gradient subsequently used for ATP formation. The chain is Photosystem II CP43 reaction center protein from Chlorella vulgaris (Green alga).